The sequence spans 303 residues: UDP-3-O-acyl-N-acetylglucosamine deacetylase (303 aa).

Residues H78, H237, and D241 each coordinate Zn(2+). H264 functions as the Proton donor in the catalytic mechanism.

It belongs to the LpxC family. The cofactor is Zn(2+).

It carries out the reaction a UDP-3-O-[(3R)-3-hydroxyacyl]-N-acetyl-alpha-D-glucosamine + H2O = a UDP-3-O-[(3R)-3-hydroxyacyl]-alpha-D-glucosamine + acetate. The protein operates within glycolipid biosynthesis; lipid IV(A) biosynthesis; lipid IV(A) from (3R)-3-hydroxytetradecanoyl-[acyl-carrier-protein] and UDP-N-acetyl-alpha-D-glucosamine: step 2/6. In terms of biological role, catalyzes the hydrolysis of UDP-3-O-myristoyl-N-acetylglucosamine to form UDP-3-O-myristoylglucosamine and acetate, the committed step in lipid A biosynthesis. The sequence is that of UDP-3-O-acyl-N-acetylglucosamine deacetylase from Coxiella burnetii (strain CbuK_Q154) (Coxiella burnetii (strain Q154)).